Reading from the N-terminus, the 377-residue chain is T-protein (377 aa).

In terms of domain architecture, Chorismate mutase spans 1–92 (MSFMEALKDL…ESYANENQFG (92 aa)). Positions 101–364 (HKIVIVGGYG…DYSEQFLKES (264 aa)) constitute a Prephenate/arogenate dehydrogenase domain.

It in the C-terminal section; belongs to the prephenate/arogenate dehydrogenase family.

It localises to the cytoplasm. The enzyme catalyses chorismate = prephenate. It carries out the reaction prephenate + NAD(+) = 3-(4-hydroxyphenyl)pyruvate + CO2 + NADH. It participates in amino-acid biosynthesis; L-tyrosine biosynthesis; (4-hydroxyphenyl)pyruvate from prephenate (NAD(+) route): step 1/1. It functions in the pathway metabolic intermediate biosynthesis; prephenate biosynthesis; prephenate from chorismate: step 1/1. The chain is T-protein (tyrA) from Haemophilus influenzae (strain ATCC 51907 / DSM 11121 / KW20 / Rd).